The primary structure comprises 492 residues: Ketol-acid reductoisomerase (NADP(+)) (492 aa).

Positions 14 to 208 (LDQLGRCRFM…GGHKAGVLES (195 aa)) constitute a KARI N-terminal Rossmann domain. Residues 45-48 (CGAQ), Arg68, Arg76, Ser78, and 108-110 (DKQ) each bind NADP(+). Residue His132 is part of the active site. NADP(+) is bound at residue Gly158. KARI C-terminal knotted domains are found at residues 209–344 (SFVA…NAPK) and 345–485 (YDGK…MTDM). Asp217, Glu221, Glu389, and Glu393 together coordinate Mg(2+). Ser414 is a binding site for substrate.

It belongs to the ketol-acid reductoisomerase family. The cofactor is Mg(2+).

It carries out the reaction (2R)-2,3-dihydroxy-3-methylbutanoate + NADP(+) = (2S)-2-acetolactate + NADPH + H(+). The enzyme catalyses (2R,3R)-2,3-dihydroxy-3-methylpentanoate + NADP(+) = (S)-2-ethyl-2-hydroxy-3-oxobutanoate + NADPH + H(+). The protein operates within amino-acid biosynthesis; L-isoleucine biosynthesis; L-isoleucine from 2-oxobutanoate: step 2/4. Its pathway is amino-acid biosynthesis; L-valine biosynthesis; L-valine from pyruvate: step 2/4. In terms of biological role, involved in the biosynthesis of branched-chain amino acids (BCAA). Catalyzes an alkyl-migration followed by a ketol-acid reduction of (S)-2-acetolactate (S2AL) to yield (R)-2,3-dihydroxy-isovalerate. In the isomerase reaction, S2AL is rearranged via a Mg-dependent methyl migration to produce 3-hydroxy-3-methyl-2-ketobutyrate (HMKB). In the reductase reaction, this 2-ketoacid undergoes a metal-dependent reduction by NADPH to yield (R)-2,3-dihydroxy-isovalerate. This Haemophilus influenzae (strain PittGG) protein is Ketol-acid reductoisomerase (NADP(+)).